Reading from the N-terminus, the 293-residue chain is Ribosomal protein L11 methyltransferase (293 aa).

T145, G166, D188, and N230 together coordinate S-adenosyl-L-methionine.

It belongs to the methyltransferase superfamily. PrmA family.

It is found in the cytoplasm. The catalysed reaction is L-lysyl-[protein] + 3 S-adenosyl-L-methionine = N(6),N(6),N(6)-trimethyl-L-lysyl-[protein] + 3 S-adenosyl-L-homocysteine + 3 H(+). In terms of biological role, methylates ribosomal protein L11. This chain is Ribosomal protein L11 methyltransferase, found in Shewanella baltica (strain OS155 / ATCC BAA-1091).